A 207-amino-acid chain; its full sequence is Uridine kinase (207 aa).

Residue 13 to 20 (GASGSGKT) coordinates ATP.

It belongs to the uridine kinase family.

Its subcellular location is the cytoplasm. The enzyme catalyses uridine + ATP = UMP + ADP + H(+). It carries out the reaction cytidine + ATP = CMP + ADP + H(+). It participates in pyrimidine metabolism; CTP biosynthesis via salvage pathway; CTP from cytidine: step 1/3. It functions in the pathway pyrimidine metabolism; UMP biosynthesis via salvage pathway; UMP from uridine: step 1/1. This chain is Uridine kinase, found in Ureaplasma urealyticum serovar 10 (strain ATCC 33699 / Western).